A 140-amino-acid chain; its full sequence is Bacilliredoxin STH2395 (140 aa).

It belongs to the bacilliredoxin family.

The sequence is that of Bacilliredoxin STH2395 from Symbiobacterium thermophilum (strain DSM 24528 / JCM 14929 / IAM 14863 / T).